The chain runs to 327 residues: Biotin synthase (327 aa).

A Radical SAM core domain is found at 49–282 (FNKEKIDLCS…NKVIRLCGGR (234 aa)). Residues C67, C71, and C74 each coordinate [4Fe-4S] cluster. [2Fe-2S] cluster is bound by residues S110, C142, C201, and R277.

It belongs to the radical SAM superfamily. Biotin synthase family. As to quaternary structure, homodimer. The cofactor is [4Fe-4S] cluster. [2Fe-2S] cluster serves as cofactor.

The catalysed reaction is (4R,5S)-dethiobiotin + (sulfur carrier)-SH + 2 reduced [2Fe-2S]-[ferredoxin] + 2 S-adenosyl-L-methionine = (sulfur carrier)-H + biotin + 2 5'-deoxyadenosine + 2 L-methionine + 2 oxidized [2Fe-2S]-[ferredoxin]. Its pathway is cofactor biosynthesis; biotin biosynthesis; biotin from 7,8-diaminononanoate: step 2/2. Its function is as follows. Catalyzes the conversion of dethiobiotin (DTB) to biotin by the insertion of a sulfur atom into dethiobiotin via a radical-based mechanism. The sequence is that of Biotin synthase from Methanococcus maripaludis (strain DSM 14266 / JCM 13030 / NBRC 101832 / S2 / LL).